Reading from the N-terminus, the 190-residue chain is GTP cyclohydrolase 1 (190 aa).

Residues Cys-75, His-78, and Cys-146 each contribute to the Zn(2+) site.

The protein belongs to the GTP cyclohydrolase I family. In terms of assembly, toroid-shaped homodecamer, composed of two pentamers of five dimers.

The catalysed reaction is GTP + H2O = 7,8-dihydroneopterin 3'-triphosphate + formate + H(+). Its pathway is cofactor biosynthesis; 7,8-dihydroneopterin triphosphate biosynthesis; 7,8-dihydroneopterin triphosphate from GTP: step 1/1. This is GTP cyclohydrolase 1 from Campylobacter jejuni (strain RM1221).